The primary structure comprises 112 residues: Putative pterin-4-alpha-carbinolamine dehydratase (112 aa).

Belongs to the pterin-4-alpha-carbinolamine dehydratase family.

The enzyme catalyses (4aS,6R)-4a-hydroxy-L-erythro-5,6,7,8-tetrahydrobiopterin = (6R)-L-erythro-6,7-dihydrobiopterin + H2O. This is Putative pterin-4-alpha-carbinolamine dehydratase from Shewanella baltica (strain OS223).